A 298-amino-acid chain; its full sequence is CD-NTase-associated protein 6 (298 aa).

ATP is bound by residues 80–85 (GTGKTA) and 204–205 (RR).

This sequence belongs to the AAA ATPase family. As to quaternary structure, homohexamer, forms a 1:1:6 CdnC:Cap7:Cap6 complex.

In terms of biological role, regulates complex assembly in a CBASS antivirus system. CBASS (cyclic oligonucleotide-based antiphage signaling system) provides immunity against bacteriophage. The CD-NTase protein synthesizes cyclic nucleotides in response to infection; these serve as specific second messenger signals. The signals activate a diverse range of effectors, leading to bacterial cell death and thus abortive phage infection. A type III CBASS system. Expression of this CBASS system (Cap18-Cap6-Cap7-CdnC-CapW-Cap17) in a susceptible E.coli (strain MG1655) confers resistance to bacteriophage P1. Binds and disassembles an active CdnC:Cap7 complex, inhibiting the complex's ability to synthesize cyclic nucleotide second messengers. An AAA+-ATPase remodeler, in the absence of foreign threat Cap6 probably maintains the Cap7 protein in its open, inactive state. Once activated (presumably by a bacteriophage protein) Cap7 binds to and activates its cognate CD-NTase (CdnC in this bacteria) to synthesize a cyclic nucleotide second messenger which leads to abortive phage infection. The sequence is that of CD-NTase-associated protein 6 from Escherichia coli (strain KTE188).